A 561-amino-acid polypeptide reads, in one-letter code: Glutamine--tRNA ligase (561 aa).

The 'HIGH' region motif lies at 34–44; the sequence is PEPNGYLHIGH. Residues 35-37 and 41-47 each bind ATP; these read EPN and HIGHAKS. The L-glutamine site is built by Asp-67 and Tyr-212. Residues Thr-231, 261 to 262, and 269 to 271 contribute to the ATP site; these read RL and MSK. The 'KMSKS' region signature appears at 268–272; sequence VMSKR.

It belongs to the class-I aminoacyl-tRNA synthetase family. Monomer.

It is found in the cytoplasm. The catalysed reaction is tRNA(Gln) + L-glutamine + ATP = L-glutaminyl-tRNA(Gln) + AMP + diphosphate. The chain is Glutamine--tRNA ligase from Idiomarina loihiensis (strain ATCC BAA-735 / DSM 15497 / L2-TR).